Consider the following 682-residue polypeptide: Inactive protein-arginine deiminase type-6 (682 aa).

A phosphoserine mark is found at Ser2 and Ser434.

It belongs to the protein arginine deiminase family. Homodimers. Associates with alpha-tubulin. Post-translationally, phosphorylation at Ser-2, possibly by RSK-type kinases, and Ser-434 creates binding sites for 14-3-3 proteins. Expressed at very high levels in oocytes. Weakly expressed in testis. Expressed in primordial, primary, secondary and Graafian follicles, and in immature oocytes, mature eggs and blastocyst (at protein level).

Its subcellular location is the cytoplasm. The protein localises to the nucleus. It localises to the cytoplasmic vesicle. It is found in the secretory vesicle. The protein resides in the cortical granule. In terms of biological role, structural constituent of cytoplasmic lattices, which plays a key role in early embryonic development. Cytoplasmic lattices consist in fibrous structures found in the cytoplasm of oocytes and preimplantation embryos. They are required to store maternal proteins critical for embryonic development, such as ribosomal proteins and proteins that control epigenetic reprogramming of the preimplantation embryo, and prevent their degradation or activation. In contrast to other members of the family, does not show protein-arginine deiminase activity due to its inability to bind Ca(2+). This is Inactive protein-arginine deiminase type-6 from Mus musculus (Mouse).